Consider the following 117-residue polypeptide: UPF0102 protein Rsph17025_0472 (117 aa).

It belongs to the UPF0102 family.

This Cereibacter sphaeroides (strain ATCC 17025 / ATH 2.4.3) (Rhodobacter sphaeroides) protein is UPF0102 protein Rsph17025_0472.